The sequence spans 238 residues: NADH-quinone oxidoreductase subunit C (238 aa).

Residues 1–20 (MSSPDQNPSDAAGQTGSSNE) form a disordered region.

Belongs to the complex I 30 kDa subunit family. In terms of assembly, NDH-1 is composed of 14 different subunits. Subunits NuoB, C, D, E, F, and G constitute the peripheral sector of the complex.

It localises to the cell membrane. The enzyme catalyses a quinone + NADH + 5 H(+)(in) = a quinol + NAD(+) + 4 H(+)(out). NDH-1 shuttles electrons from NADH, via FMN and iron-sulfur (Fe-S) centers, to quinones in the respiratory chain. The immediate electron acceptor for the enzyme in this species is believed to be a menaquinone. Couples the redox reaction to proton translocation (for every two electrons transferred, four hydrogen ions are translocated across the cytoplasmic membrane), and thus conserves the redox energy in a proton gradient. The sequence is that of NADH-quinone oxidoreductase subunit C from Mycobacterium marinum (strain ATCC BAA-535 / M).